The primary structure comprises 597 residues: Lysine--tRNA ligase (597 aa).

Mg(2+) is bound by residues Glu-501 and Glu-508.

Belongs to the class-II aminoacyl-tRNA synthetase family. As to quaternary structure, homodimer. Mg(2+) serves as cofactor.

The protein localises to the cytoplasm. The enzyme catalyses tRNA(Lys) + L-lysine + ATP = L-lysyl-tRNA(Lys) + AMP + diphosphate. The polypeptide is Lysine--tRNA ligase (lysS) (Aquifex aeolicus (strain VF5)).